We begin with the raw amino-acid sequence, 554 residues long: Glucose-6-phosphate isomerase (554 aa).

The Proton donor role is filled by E359. Catalysis depends on residues H390 and K518.

This sequence belongs to the GPI family.

The protein localises to the cytoplasm. The catalysed reaction is alpha-D-glucose 6-phosphate = beta-D-fructose 6-phosphate. It functions in the pathway carbohydrate biosynthesis; gluconeogenesis. Its pathway is carbohydrate degradation; glycolysis; D-glyceraldehyde 3-phosphate and glycerone phosphate from D-glucose: step 2/4. Its function is as follows. Catalyzes the reversible isomerization of glucose-6-phosphate to fructose-6-phosphate. In Pseudomonas entomophila (strain L48), this protein is Glucose-6-phosphate isomerase.